The sequence spans 154 residues: Endoribonuclease YbeY (154 aa).

Residues histidine 113, histidine 117, and histidine 123 each contribute to the Zn(2+) site.

Belongs to the endoribonuclease YbeY family. Zn(2+) is required as a cofactor.

The protein resides in the cytoplasm. In terms of biological role, single strand-specific metallo-endoribonuclease involved in late-stage 70S ribosome quality control and in maturation of the 3' terminus of the 16S rRNA. This chain is Endoribonuclease YbeY, found in Verminephrobacter eiseniae (strain EF01-2).